The sequence spans 237 residues: Uridylate kinase (237 aa).

11 to 14 (KLSG) contributes to the ATP binding site. Glycine 53 is a UMP binding site. Residues glycine 54 and arginine 58 each contribute to the ATP site. UMP-binding positions include aspartate 73 and 134–141 (TGNPFFTT). Positions 161, 167, and 170 each coordinate ATP.

The protein belongs to the UMP kinase family. Homohexamer.

The protein resides in the cytoplasm. It carries out the reaction UMP + ATP = UDP + ADP. Its pathway is pyrimidine metabolism; CTP biosynthesis via de novo pathway; UDP from UMP (UMPK route): step 1/1. Its activity is regulated as follows. Inhibited by UTP. Its function is as follows. Catalyzes the reversible phosphorylation of UMP to UDP. This Burkholderia cenocepacia (strain HI2424) protein is Uridylate kinase.